A 333-amino-acid polypeptide reads, in one-letter code: Ketoreductase sphI (333 aa).

Tyr-167 is a binding site for NADP(+).

The protein belongs to the NAD(P)-dependent epimerase/dehydratase family. Dihydroflavonol-4-reductase subfamily.

Ketoreductase; part of the gene cluster that mediates the biosynthesis of sphingofungins, bioactive molecules acting as sphingolipid inhibitors via inhibiting serine palmitoyl transferase (SPT). Does not seem to be involved in any biosynthetic process leading to the production of sphingofungins, but might be connected to a regulation or resistance mechanism. This is Ketoreductase sphI from Aspergillus fumigatus (strain CBS 144.89 / FGSC A1163 / CEA10) (Neosartorya fumigata).